Consider the following 727-residue polypeptide: Synaptic vesicle glycoprotein 2C (727 aa).

Residues 1–57 (MEDSYKDRTSLMKGAKDIAKEVKKQTVKKVNQAVDRAQDEYTQRSYSRFQDEDDDDD) are interaction with SYT1. Residues 1–154 (MEDSYKDRTS…CGHGRFQWAL (154 aa)) lie on the Cytoplasmic side of the membrane. A disordered region spans residues 22–120 (VKKQTVKKVN…QPKGDEYKDR (99 aa)). Phosphoserine occurs at positions 75 and 76. Position 79 is a phosphothreonine (T79). A helical transmembrane segment spans residues 155-175 (FFVLGMALMADGVEVFVVGFV). Over 176-191 (LPSAETDLCIPNSGSG) the chain is Extracellular. Residues 192–212 (WLGSIVYLGMMVGAFFWGGLA) form a helical membrane-spanning segment. Residues 213–226 (DKVGRKQSLLICMS) lie on the Cytoplasmic side of the membrane. The chain crosses the membrane as a helical span at residues 227 to 247 (VNGFFAFLSSFVQGYGFFLLC). R248 is a topological domain (extracellular). Residues 249–269 (LLSGFGIGGAIPTVFSYFAEV) form a helical membrane-spanning segment. Residues 270-280 (LAREKRGEHLS) lie on the Cytoplasmic side of the membrane. Residues 281–301 (WLCMFWMIGGIYASAMAWAII) traverse the membrane as a helical segment. At 302 to 320 (PHYGWSFSMGSAYQFHSWR) the chain is on the extracellular side. Residues 321-341 (VFVIVCALPCVSSVVALTFMP) form a helical membrane-spanning segment. Over 342–437 (ESPRFLLEVG…PVRENTIKLT (96 aa)) the chain is Cytoplasmic. Residues 438–458 (IVWFTLSFGYYGLSVWFPDVI) form a helical membrane-spanning segment. The Extracellular portion of the chain corresponds to 459–578 (KHLQSDEYAL…CQITFDDDYS (120 aa)). Y466 bears the Phosphotyrosine mark. N480, N484, N534, N559, and N565 each carry an N-linked (GlcNAc...) asparagine glycan. A (Microbial infection) C.botulinum neurotoxin type A-binding region spans residues 529-566 (NTYFKNCTFIDTLFENTDFEPYKFIDSEFQNCSFLHNK). A helical membrane pass occupies residues 579 to 599 (AYWIYFVNFLGTLAVLPGNIV). Over 600–609 (SALLMDRIGR) the chain is Cytoplasmic. The helical transmembrane segment at 610 to 630 (LTMLGGSMVLSGISCFFLWFG) threads the bilayer. Topologically, residues 631-636 (TSESMM) are extracellular. A helical membrane pass occupies residues 637–657 (IGMLCLYNGLTISAWNSLDVV). Over 658–670 (TVELYPTDRRATG) the chain is Cytoplasmic. A helical transmembrane segment spans residues 671 to 693 (FGFLNALCKAAAVLGNLIFGSLV). At 694–697 (SITK) the chain is on the extracellular side. A helical membrane pass occupies residues 698–716 (AIPILLASTVLVCGGLVGL). Topologically, residues 717-727 (RLPDTRTQVLM) are cytoplasmic.

Belongs to the major facilitator superfamily. In terms of assembly, interacts with SYT1 in a calcium-dependent manner. (Microbial infection) Interacts with C.botulinum neurotoxin type A (BoNT/A, botA). As to quaternary structure, (Microbial infection) Interacts with C.botulinum neurotoxin type F (BoNT/F). Interaction requires glycosylation of SV2 proteins. N-glycosylated. As to expression, expressed at high levels in very few brain areas including the striatum, midbrain and hindbrain, and in the olfactory bulb. Expressed at lower levels in cerebrum, hippocampus and cerebellum (at protein level). Mainly expressed in brain; also detected in lung, liver, kidney.

The protein resides in the cytoplasmic vesicle. The protein localises to the secretory vesicle. Its subcellular location is the synaptic vesicle membrane. Functionally, plays a role in the control of regulated secretion in neural and endocrine cells, enhancing selectively low-frequency neurotransmission. Positively regulates vesicle fusion by maintaining the readily releasable pool of secretory vesicles. In terms of biological role, (Microbial infection) Receptor for C.botulinum neurotoxin type A (BoNT/A, botA); the toxin binds Sv2c via extracellular loop 4. Restores uptake of BoNT/A in rat cells that are deleted for SV2 receptor. Its function is as follows. (Microbial infection) Possible receptor for C.botulinum neurotoxin type D (BoNT/D, botD); BoNT/D does not bind to extracellular loop 4 as do BoNT/A and BoNT/E. Another group does not find a convincing interaction with SV2. (Microbial infection) Receptor for C.botulinum neurotoxin type F (BoNT/F); binding requires glycosylation of Asn-573. The protein is Synaptic vesicle glycoprotein 2C (Sv2c) of Rattus norvegicus (Rat).